Reading from the N-terminus, the 360-residue chain is Photosystem II protein D1 (360 aa).

Helical transmembrane passes span Tyr-29–Ser-46, His-118–Leu-133, and Trp-142–Ala-156. A chlorophyll a-binding site is contributed by His-118. Tyr-126 provides a ligand contact to pheophytin a. 2 residues coordinate [CaMn4O5] cluster: Asp-170 and Glu-189. A helical membrane pass occupies residues Phe-197–Leu-218. His-198 is a chlorophyll a binding site. A quinone-binding positions include His-215 and Ser-264–Phe-265. His-215 serves as a coordination point for Fe cation. His-272 provides a ligand contact to Fe cation. A helical transmembrane segment spans residues Phe-274–Met-288. Positions 332, 333, 342, and 344 each coordinate [CaMn4O5] cluster. Residues Ser-345–Gly-360 constitute a propeptide that is removed on maturation.

The protein belongs to the reaction center PufL/M/PsbA/D family. PSII is composed of 1 copy each of membrane proteins PsbA, PsbB, PsbC, PsbD, PsbE, PsbF, PsbH, PsbI, PsbJ, PsbK, PsbL, PsbM, PsbT, PsbX, PsbY, PsbZ, Psb30/Ycf12, at least 3 peripheral proteins of the oxygen-evolving complex and a large number of cofactors. It forms dimeric complexes. The cofactor is The D1/D2 heterodimer binds P680, chlorophylls that are the primary electron donor of PSII, and subsequent electron acceptors. It shares a non-heme iron and each subunit binds pheophytin, quinone, additional chlorophylls, carotenoids and lipids. D1 provides most of the ligands for the Mn4-Ca-O5 cluster of the oxygen-evolving complex (OEC). There is also a Cl(-1) ion associated with D1 and D2, which is required for oxygen evolution. The PSII complex binds additional chlorophylls, carotenoids and specific lipids.. Post-translationally, tyr-161 forms a radical intermediate that is referred to as redox-active TyrZ, YZ or Y-Z. C-terminally processed by CTPA; processing is essential to allow assembly of the oxygen-evolving complex and thus photosynthetic growth.

The protein localises to the plastid. It is found in the chloroplast thylakoid membrane. It carries out the reaction 2 a plastoquinone + 4 hnu + 2 H2O = 2 a plastoquinol + O2. In terms of biological role, photosystem II (PSII) is a light-driven water:plastoquinone oxidoreductase that uses light energy to abstract electrons from H(2)O, generating O(2) and a proton gradient subsequently used for ATP formation. It consists of a core antenna complex that captures photons, and an electron transfer chain that converts photonic excitation into a charge separation. The D1/D2 (PsbA/PsbD) reaction center heterodimer binds P680, the primary electron donor of PSII as well as several subsequent electron acceptors. This is Photosystem II protein D1 from Phaeodactylum tricornutum (strain CCAP 1055/1).